Consider the following 310-residue polypeptide: HTH-type transcriptional regulator CbbR (310 aa).

The 58-residue stretch at 7–64 (ITLKQLRALVAVAGSASLTGGATRLGLTPPAIHSQIRNLEEAFGVPLLHRPPETGSFT) folds into the HTH lysR-type domain. Positions 24–43 (LTGGATRLGLTPPAIHSQIR) form a DNA-binding region, H-T-H motif.

It belongs to the LysR transcriptional regulatory family.

In terms of biological role, transcriptional activator for the cbb operon for RuBisCO and other Calvin cycle genes. The protein is HTH-type transcriptional regulator CbbR (cbbR) of Cereibacter sphaeroides (Rhodobacter sphaeroides).